Consider the following 393-residue polypeptide: Beta-ureidopropionase (393 aa).

The region spanning 72 to 344 (VRVGLVQNRI…DGLLVTELNL (273 aa)) is the CN hydrolase domain. Residue Glu-119 is the Proton acceptor of the active site. Lys-196 (proton donor) is an active-site residue. Cys-233 acts as the Nucleophile in catalysis. A Phosphoserine modification is found at Ser-378.

This sequence belongs to the carbon-nitrogen hydrolase superfamily. BUP family. In terms of assembly, homodimer, homotetramer, homooctamer; can also form higher homooligomers. The N-terminus is blocked. As to expression, detected in liver (at protein level).

It localises to the cytoplasm. It catalyses the reaction 3-(carbamoylamino)propanoate + H2O + 2 H(+) = beta-alanine + NH4(+) + CO2. The catalysed reaction is 3-(carbamoylamino)-2-methylpropanoate + H2O + 2 H(+) = (R)-3-amino-2-methylpropanoate + NH4(+) + CO2. It functions in the pathway amino-acid biosynthesis; beta-alanine biosynthesis. With respect to regulation, allosteric enzyme with positive cooperativity toward the substrate N-carbamoyl-beta-alanine at low substrate concentrations (below 12 nM). Displays no cooperativity at substrate levels above 12 nM. Functionally, catalyzes a late step in pyrimidine degradation. Converts N-carbamoyl-beta-alanine (3-ureidopropanoate) into beta-alanine, ammonia and carbon dioxide. Likewise, converts N-carbamoyl-beta-aminoisobutyrate (3-ureidoisobutyrate) into beta-aminoisobutyrate, ammonia and carbon dioxide. This Rattus norvegicus (Rat) protein is Beta-ureidopropionase (Upb1).